Consider the following 475-residue polypeptide: Glycogen synthase (475 aa).

Lys-15 is an ADP-alpha-D-glucose binding site.

The protein belongs to the glycosyltransferase 1 family. Bacterial/plant glycogen synthase subfamily.

It carries out the reaction [(1-&gt;4)-alpha-D-glucosyl](n) + ADP-alpha-D-glucose = [(1-&gt;4)-alpha-D-glucosyl](n+1) + ADP + H(+). Its pathway is glycan biosynthesis; glycogen biosynthesis. Functionally, synthesizes alpha-1,4-glucan chains using ADP-glucose. In Kosmotoga olearia (strain ATCC BAA-1733 / DSM 21960 / TBF 19.5.1), this protein is Glycogen synthase.